Here is a 361-residue protein sequence, read N- to C-terminus: UDP-N-acetylglucosamine--N-acetylmuramyl-(pentapeptide) pyrophosphoryl-undecaprenol N-acetylglucosamine transferase (361 aa).

UDP-N-acetyl-alpha-D-glucosamine-binding positions include 11–13 (TGG), N124, R164, S192, and Q295.

Belongs to the glycosyltransferase 28 family. MurG subfamily.

The protein localises to the cell membrane. The enzyme catalyses di-trans,octa-cis-undecaprenyl diphospho-N-acetyl-alpha-D-muramoyl-L-alanyl-D-glutamyl-meso-2,6-diaminopimeloyl-D-alanyl-D-alanine + UDP-N-acetyl-alpha-D-glucosamine = di-trans,octa-cis-undecaprenyl diphospho-[N-acetyl-alpha-D-glucosaminyl-(1-&gt;4)]-N-acetyl-alpha-D-muramoyl-L-alanyl-D-glutamyl-meso-2,6-diaminopimeloyl-D-alanyl-D-alanine + UDP + H(+). The protein operates within cell wall biogenesis; peptidoglycan biosynthesis. Its function is as follows. Cell wall formation. Catalyzes the transfer of a GlcNAc subunit on undecaprenyl-pyrophosphoryl-MurNAc-pentapeptide (lipid intermediate I) to form undecaprenyl-pyrophosphoryl-MurNAc-(pentapeptide)GlcNAc (lipid intermediate II). The sequence is that of UDP-N-acetylglucosamine--N-acetylmuramyl-(pentapeptide) pyrophosphoryl-undecaprenol N-acetylglucosamine transferase from Deinococcus geothermalis (strain DSM 11300 / CIP 105573 / AG-3a).